Reading from the N-terminus, the 548-residue chain is LDL receptor repeat-containing protein egg-2 (548 aa).

The Cytoplasmic segment spans residues Met-1–Ala-49. A helical; Signal-anchor for type II membrane protein membrane pass occupies residues Ile-50–Phe-70. Over Leu-71–Pro-548 the chain is Extracellular. An N-linked (GlcNAc...) asparagine glycan is attached at Asn-119. 8 LDL-receptor class A domains span residues Thr-122–Lys-160, Glu-161–Arg-213, Lys-215–Asn-252, Lys-253–Asp-288, Thr-291–Pro-328, Lys-370–Thr-412, Glu-416–Asp-454, and Lys-455–Ser-492. 23 cysteine pairs are disulfide-bonded: Cys-130-Cys-150, Cys-144-Cys-159, Cys-162-Cys-190, Cys-168-Cys-203, Cys-197-Cys-212, Cys-216-Cys-229, Cys-223-Cys-242, Cys-236-Cys-251, Cys-254-Cys-265, Cys-261-Cys-278, Cys-272-Cys-287, Cys-292-Cys-305, Cys-300-Cys-318, Cys-312-Cys-327, Cys-371-Cys-389, Cys-379-Cys-402, Cys-396-Cys-411, Cys-417-Cys-431, Cys-427-Cys-444, Cys-438-Cys-453, Cys-456-Cys-469, Cys-463-Cys-482, and Cys-476-Cys-491. The N-linked (GlcNAc...) asparagine glycan is linked to Asn-244. Asn-527 carries N-linked (GlcNAc...) asparagine glycosylation.

The protein localises to the cell membrane. The protein resides in the endosome membrane. In terms of biological role, probable receptor which is required for the oocyte-to-zygote transition although its exact function is controversial. Redundantly with egg-1, seems to be required for fertilization probably by promoting the interaction or fusion between sperm and oocyte. Conversely, shown to be dispensable for fertilization but required together with egg-1 for the formation of a continuous and cohesive eggshell chitin layer by maintaining a homogenous distribution of chitin synthase chs-1 at the unfertilized oocyte cell membrane. Appears to recruit or maintain together to the unfertilized oocyte cortex several proteins including chs-1, kinase mbk-2 and pseudophosphatase egg-3, and possibly egg-4 and egg-5. The sequence is that of LDL receptor repeat-containing protein egg-2 from Caenorhabditis elegans.